We begin with the raw amino-acid sequence, 64 residues long: Relaxin (64 aa).

Disulfide bonds link Cys-11–Cys-51, Cys-23–Cys-64, and Cys-50–Cys-55.

The protein belongs to the insulin family. In terms of assembly, heterodimer of a B chain and an A chain linked by two disulfide bonds.

The protein resides in the secreted. This Leucoraja erinaceus (Little skate) protein is Relaxin.